The following is a 326-amino-acid chain: Protein BCCIP homolog (326 aa).

The segment at 37 to 81 is disordered; that stretch reads SHPEDCQCSDEDISFDEKQKIPNLPRKGKEEQVSDSSDEEDSQED. A Phosphoserine modification is found at Ser-45. Positions 72–81 are enriched in acidic residues; the sequence is SSDEEDSQED.

This sequence belongs to the BCP1 family.

The polypeptide is Protein BCCIP homolog (Arabidopsis thaliana (Mouse-ear cress)).